Here is a 174-residue protein sequence, read N- to C-terminus: Ribosome rescue factor SmrB (174 aa).

One can recognise a Smr domain in the interval 96 to 171 (LDLHGMNQQQ…GDSAILVLLD (76 aa)).

This sequence belongs to the SmrB family. Associates with collided ribosomes, but not with correctly translating polysomes.

Its function is as follows. Acts as a ribosome collision sensor. Detects stalled/collided disomes (pairs of ribosomes where the leading ribosome is stalled and a second ribosome has collided with it) and endonucleolytically cleaves mRNA at the 5' boundary of the stalled ribosome. Stalled/collided disomes form a new interface (primarily via the 30S subunits) that binds SmrB. Cleaved mRNA becomes available for tmRNA ligation, leading to ribosomal subunit dissociation and rescue of stalled ribosomes. This Aeromonas hydrophila subsp. hydrophila (strain ATCC 7966 / DSM 30187 / BCRC 13018 / CCUG 14551 / JCM 1027 / KCTC 2358 / NCIMB 9240 / NCTC 8049) protein is Ribosome rescue factor SmrB.